Consider the following 609-residue polypeptide: Phosphoenolpyruvate carboxykinase [GTP] (609 aa).

Residues R81 and 220–222 each bind substrate; that span reads YGG. 2 residues coordinate Mn(2+): K229 and H249. A substrate-binding site is contributed by S271. 272 to 277 serves as a coordination point for GTP; that stretch reads ACGKTN. The active site involves C273. Mn(2+) is bound at residue D296. Position 387-389 (387-389) interacts with substrate; sequence NSR. Residues R389, R420, and 515 to 518 contribute to the GTP site; that span reads FGEN.

Belongs to the phosphoenolpyruvate carboxykinase [GTP] family. Monomer. It depends on Mn(2+) as a cofactor.

It localises to the cytoplasm. The enzyme catalyses oxaloacetate + GTP = phosphoenolpyruvate + GDP + CO2. It functions in the pathway carbohydrate biosynthesis; gluconeogenesis. Catalyzes the conversion of oxaloacetate (OAA) to phosphoenolpyruvate (PEP), the rate-limiting step in the metabolic pathway that produces glucose from lactate and other precursors derived from the citric acid cycle. This chain is Phosphoenolpyruvate carboxykinase [GTP], found in Mycobacterium ulcerans (strain Agy99).